The chain runs to 343 residues: Cytoplasmic tRNA 2-thiolation protein 1 (343 aa).

The protein belongs to the TtcA family. CTU1/NCS6/ATPBD3 subfamily.

Its subcellular location is the cytoplasm. It participates in tRNA modification; 5-methoxycarbonylmethyl-2-thiouridine-tRNA biosynthesis. Its function is as follows. Plays a central role in 2-thiolation of mcm(5)S(2)U at tRNA wobble positions of tRNA(Lys), tRNA(Glu) and tRNA(Gln). Directly binds tRNAs and probably acts by catalyzing adenylation of tRNAs, an intermediate required for 2-thiolation. It is unclear whether it acts as a sulfurtransferase that transfers sulfur from thiocarboxylated URM1 onto the uridine of tRNAs at wobble position. This Drosophila ananassae (Fruit fly) protein is Cytoplasmic tRNA 2-thiolation protein 1.